The chain runs to 157 residues: Phosphopantetheine adenylyltransferase (157 aa).

Substrate is bound at residue T8. ATP contacts are provided by residues 8 to 9 (TF) and H16. 3 residues coordinate substrate: K40, T72, and R86. Residues 87-89 (GLR), E97, and 122-128 (YSFLSSS) each bind ATP.

This sequence belongs to the bacterial CoaD family. Homohexamer. It depends on Mg(2+) as a cofactor.

The protein localises to the cytoplasm. The enzyme catalyses (R)-4'-phosphopantetheine + ATP + H(+) = 3'-dephospho-CoA + diphosphate. It participates in cofactor biosynthesis; coenzyme A biosynthesis; CoA from (R)-pantothenate: step 4/5. Its function is as follows. Reversibly transfers an adenylyl group from ATP to 4'-phosphopantetheine, yielding dephospho-CoA (dPCoA) and pyrophosphate. This is Phosphopantetheine adenylyltransferase from Prochlorococcus marinus (strain AS9601).